The sequence spans 590 residues: Phosphomethylpyrimidine synthase (590 aa).

Substrate contacts are provided by residues Asn-197, Met-226, Tyr-255, His-291, 311–313 (SRG), 352–355 (DGLR), and Glu-391. His-395 is a Zn(2+) binding site. Residue Tyr-418 participates in substrate binding. Residue His-459 participates in Zn(2+) binding. [4Fe-4S] cluster contacts are provided by Cys-539, Cys-542, and Cys-547.

This sequence belongs to the ThiC family. [4Fe-4S] cluster is required as a cofactor.

It catalyses the reaction 5-amino-1-(5-phospho-beta-D-ribosyl)imidazole + S-adenosyl-L-methionine = 4-amino-2-methyl-5-(phosphooxymethyl)pyrimidine + CO + 5'-deoxyadenosine + formate + L-methionine + 3 H(+). It functions in the pathway cofactor biosynthesis; thiamine diphosphate biosynthesis. Functionally, catalyzes the synthesis of the hydroxymethylpyrimidine phosphate (HMP-P) moiety of thiamine from aminoimidazole ribotide (AIR) in a radical S-adenosyl-L-methionine (SAM)-dependent reaction. This chain is Phosphomethylpyrimidine synthase, found in Bacillus velezensis (strain DSM 23117 / BGSC 10A6 / LMG 26770 / FZB42) (Bacillus amyloliquefaciens subsp. plantarum).